The following is a 607-amino-acid chain: MRTIKFFFAVAIATVAKAQWGGGGASAGQRLTVGNGQTQHKGVADGYSYEIWLDNTGGSGSMTLGSGATFKAEWNASVNRGNFLARRGLDFGSQKKATDYSYIGLDYTATYRQTGSASGNSRLCVYGWFQNRGVQGVPLVEYYIIEDWVDWVSDAQGRMVTIDGAQYKIFQMDHTGPTINGGSETFKQYFSVRQQKRTSGHITVSDHFKEWAKQGWGIGNLYEVALNAEGWQSSGIADVTKLDVYTTQKGSNPAPTSTGTVPSSSAGGSTANGKKFTVGNGQNQHKGVNDGFSYEIWLDNTGGNGSMTLGSGATFKAEWNAAVNRGNFLARRGLDFGSQKKATDYDYIGLDYAATYKQTASASGNSRLCVYGWFQNRGLNGVPLVEYYIIEDWVDWVPDAQGKMVTIDGAQYKIFQMDHTGPTINGGSETFKQYFSVRQQKRTSGHITVSDHFKEWAKQGWGIGNLYEVALNAEGWQSSGVADVTLLDVYTTPKGSSPATSAAPRTTTRTTTRTKSLPTNYNKCSARITAQGYKCCSDPNCVVYYTDEDGTWGVENNDWCGCGVEQCSSKITSQGYKCCSDPNCVVFYTDDDGKWGVENNDWCGCGF.

An N-terminal signal peptide occupies residues 1–18; sequence MRTIKFFFAVAIATVAKA. One can recognise a GH11 1 domain in the interval 35–242; the sequence is NGQTQHKGVA…SSGIADVTKL (208 aa). The active-site Nucleophile is the E141. E223 serves as the catalytic Proton donor. The span at 248-272 shows a compositional bias: polar residues; it reads QKGSNPAPTSTGTVPSSSAGGSTAN. Positions 248 to 284 are disordered; the sequence is QKGSNPAPTSTGTVPSSSAGGSTANGKKFTVGNGQNQ. Residues 280–487 enclose the GH11 2 domain; it reads NGQNQHKGVN…SSGVADVTLL (208 aa). E386 (nucleophile) is an active-site residue. The active-site Proton donor is E474. Residues 493-514 are disordered; sequence PKGSSPATSAAPRTTTRTTTRT. The span at 496 to 514 shows a compositional bias: low complexity; it reads SSPATSAAPRTTTRTTTRT. CBM10 domains lie at 523–563 and 566–606; these read KCSA…CGCG and QCSS…CGCG.

The protein belongs to the glycosyl hydrolase 11 (cellulase G) family.

The enzyme catalyses Endohydrolysis of (1-&gt;4)-beta-D-xylosidic linkages in xylans.. Its pathway is glycan degradation; xylan degradation. Its function is as follows. Hydrolyzes xylans into xylobiose and xylose. The sequence is that of Bifunctional endo-1,4-beta-xylanase A (XYNA) from Neocallimastix patriciarum (Rumen fungus).